Reading from the N-terminus, the 89-residue chain is Small ribosomal subunit protein bS20 (89 aa).

This sequence belongs to the bacterial ribosomal protein bS20 family.

Binds directly to 16S ribosomal RNA. The protein is Small ribosomal subunit protein bS20 of Wolbachia sp. subsp. Drosophila simulans (strain wRi).